A 288-amino-acid polypeptide reads, in one-letter code: Energy-coupling factor transporter ATP-binding protein EcfA2 (288 aa).

Positions 2-244 (IKFEKVNYTY…VDFLKAHELG (243 aa)) constitute an ABC transporter domain. Residue 39 to 46 (GHTGSGKS) participates in ATP binding.

Belongs to the ABC transporter superfamily. Energy-coupling factor EcfA family. Forms a stable energy-coupling factor (ECF) transporter complex composed of 2 membrane-embedded substrate-binding proteins (S component), 2 ATP-binding proteins (A component) and 2 transmembrane proteins (T component).

Its subcellular location is the cell membrane. In terms of biological role, ATP-binding (A) component of a common energy-coupling factor (ECF) ABC-transporter complex. Unlike classic ABC transporters this ECF transporter provides the energy necessary to transport a number of different substrates. This chain is Energy-coupling factor transporter ATP-binding protein EcfA2, found in Lactococcus lactis subsp. lactis (strain IL1403) (Streptococcus lactis).